The primary structure comprises 104 residues: Replication restart protein PriB (104 aa).

In terms of domain architecture, SSB spans 1-101 (MTNRLALSGT…LHAEQIELID (101 aa)).

This sequence belongs to the PriB family. Homodimer. Interacts with PriA and DnaT. Component of the replication restart primosome. Primosome assembly occurs via a 'hand-off' mechanism. PriA binds to replication forks, subsequently PriB then DnaT bind; DnaT then displaces ssDNA to generate the helicase loading substrate.

Its function is as follows. Involved in the restart of stalled replication forks, which reloads the replicative helicase on sites other than the origin of replication; the PriA-PriB pathway is the major replication restart pathway. During primosome assembly it facilitates complex formation between PriA and DnaT on DNA; stabilizes PriA on DNA. Stimulates the DNA unwinding activity of PriA helicase. This is Replication restart protein PriB from Citrobacter koseri (strain ATCC BAA-895 / CDC 4225-83 / SGSC4696).